The primary structure comprises 407 residues: Na(+)-translocating NADH-quinone reductase subunit F (407 aa).

A helical membrane pass occupies residues 3 to 23; sequence ITLGIAMFTVIVLALAVLILF. The 2Fe-2S ferredoxin-type domain occupies 32 to 126; that stretch reads GDITIEINDD…SMKIELPEEV (95 aa). Positions 69, 75, 78, and 110 each coordinate [2Fe-2S] cluster. Residues 129 to 269 enclose the FAD-binding FR-type domain; sequence VKKWECTVIS…SGPFGEFFAK (141 aa).

This sequence belongs to the NqrF family. As to quaternary structure, composed of six subunits; NqrA, NqrB, NqrC, NqrD, NqrE and NqrF. It depends on [2Fe-2S] cluster as a cofactor. FAD serves as cofactor.

The protein localises to the cell inner membrane. The enzyme catalyses a ubiquinone + n Na(+)(in) + NADH + H(+) = a ubiquinol + n Na(+)(out) + NAD(+). NQR complex catalyzes the reduction of ubiquinone-1 to ubiquinol by two successive reactions, coupled with the transport of Na(+) ions from the cytoplasm to the periplasm. The first step is catalyzed by NqrF, which accepts electrons from NADH and reduces ubiquinone-1 to ubisemiquinone by a one-electron transfer pathway. The polypeptide is Na(+)-translocating NADH-quinone reductase subunit F (Histophilus somni (strain 129Pt) (Haemophilus somnus)).